The following is a 365-amino-acid chain: tRNA 2-selenouridine synthase (365 aa).

The Rhodanese domain occupies 15–138 (FVNDHPIMDA…MRQFLIETID (124 aa)). Cys-98 functions as the S-selanylcysteine intermediate in the catalytic mechanism.

Belongs to the SelU family. Monomer.

It carries out the reaction 5-methylaminomethyl-2-thiouridine(34) in tRNA + selenophosphate + (2E)-geranyl diphosphate + H2O + H(+) = 5-methylaminomethyl-2-selenouridine(34) in tRNA + (2E)-thiogeraniol + phosphate + diphosphate. The enzyme catalyses 5-methylaminomethyl-2-thiouridine(34) in tRNA + (2E)-geranyl diphosphate = 5-methylaminomethyl-S-(2E)-geranyl-thiouridine(34) in tRNA + diphosphate. It catalyses the reaction 5-methylaminomethyl-S-(2E)-geranyl-thiouridine(34) in tRNA + selenophosphate + H(+) = 5-methylaminomethyl-2-(Se-phospho)selenouridine(34) in tRNA + (2E)-thiogeraniol. The catalysed reaction is 5-methylaminomethyl-2-(Se-phospho)selenouridine(34) in tRNA + H2O = 5-methylaminomethyl-2-selenouridine(34) in tRNA + phosphate. Its function is as follows. Involved in the post-transcriptional modification of the uridine at the wobble position (U34) of tRNA(Lys), tRNA(Glu) and tRNA(Gln). Catalyzes the conversion of 2-thiouridine (S2U-RNA) to 2-selenouridine (Se2U-RNA). Acts in a two-step process involving geranylation of 2-thiouridine (S2U) to S-geranyl-2-thiouridine (geS2U) and subsequent selenation of the latter derivative to 2-selenouridine (Se2U) in the tRNA chain. The protein is tRNA 2-selenouridine synthase of Shewanella halifaxensis (strain HAW-EB4).